A 536-amino-acid polypeptide reads, in one-letter code: Nucleolar protein 58 (536 aa).

Position 34 is a phosphothreonine (Thr-34). The residue at position 109 (Ser-109) is a Phosphoserine. Lys-157 is covalently cross-linked (Glycyl lysine isopeptide (Lys-Gly) (interchain with G-Cter in SUMO2)). Positions 282–400 (IAPNVTVMVG…LEARLRILED (119 aa)) constitute a Nop domain. 2 positions are modified to phosphoserine: Ser-304 and Ser-351. Residues Lys-353, Lys-411, Lys-415, Lys-422, Lys-426, Lys-441, Lys-444, and Lys-465 each participate in a glycyl lysine isopeptide (Lys-Gly) (interchain with G-Cter in SUMO2) cross-link. Residues 414–427 (AKAEKYEHKSEVKT) are compositionally biased toward basic and acidic residues. The segment at 414–440 (AKAEKYEHKSEVKTYDPSGDSTLPTCS) is disordered. Lys-467 participates in a covalent cross-link: Glycyl lysine isopeptide (Lys-Gly) (interchain with G-Cter in SUMO); alternate. Residue Lys-467 forms a Glycyl lysine isopeptide (Lys-Gly) (interchain with G-Cter in SUMO1); alternate linkage. Residue Lys-467 forms a Glycyl lysine isopeptide (Lys-Gly) (interchain with G-Cter in SUMO2); alternate linkage. Over residues 470 to 488 (VEEEMEEEEAEEEQVVEEE) the composition is skewed to acidic residues. The disordered stretch occupies residues 470–536 (VEEEMEEEEA…KKKKKKDAED (67 aa)). Lys-492 is covalently cross-linked (Glycyl lysine isopeptide (Lys-Gly) (interchain with G-Cter in SUMO2)). Basic residues predominate over residues 492–502 (KKKKKKDKKKH). Residue Lys-504 forms a Glycyl lysine isopeptide (Lys-Gly) (interchain with G-Cter in SUMO); alternate linkage. Lys-504 is covalently cross-linked (Glycyl lysine isopeptide (Lys-Gly) (interchain with G-Cter in SUMO2); alternate). 2 positions are modified to phosphoserine: Ser-509 and Ser-521. Basic residues predominate over residues 524 to 536 (KKKKKKKKKDAED).

This sequence belongs to the NOP5/NOP56 family. As to quaternary structure, core component of box C/D small nucleolar ribonucleoprotein (snoRNP) particles; the core proteins SNU13, NOP56, NOP58 and FBL or FBLL1 assemble stepwise onto the snoRNA. Interacts with NOLC1/Nopp140. Interacts with NOPCHAP1, NUFIP1, RUVBL1 and RUVBL2; NOPCHAP1 bridges the association of NOP58 with RUVBL1:RUVBL2 and NUFIP1. Interacts with PIH1D1. Part of the small subunit (SSU) processome, composed of more than 70 proteins and the RNA chaperone small nucleolar RNA (snoRNA) U3. Sumoylation is essential for high-affinity binding to snoRNAs.

The protein resides in the nucleus. The protein localises to the nucleolus. It is found in the nucleoplasm. Its function is as follows. Required for the biogenesis of box C/D snoRNAs such as U3, U8 and U14 snoRNAs. Part of the small subunit (SSU) processome, first precursor of the small eukaryotic ribosomal subunit. During the assembly of the SSU processome in the nucleolus, many ribosome biogenesis factors, an RNA chaperone and ribosomal proteins associate with the nascent pre-rRNA and work in concert to generate RNA folding, modifications, rearrangements and cleavage as well as targeted degradation of pre-ribosomal RNA by the RNA exosome. Core component of box C/D small nucleolar ribonucleoprotein (snoRNP) complexes that function in methylation of multiple sites on ribosomal RNAs (rRNAs) and messenger RNAs (mRNAs). The protein is Nucleolar protein 58 (Nop58) of Mus musculus (Mouse).